Here is a 633-residue protein sequence, read N- to C-terminus: Peptidoglycan D,D-transpeptidase MrdA (633 aa).

Residues Leu22 to Leu42 form a helical membrane-spanning segment. The active-site Acyl-ester intermediate is Ser330.

The protein belongs to the transpeptidase family. MrdA subfamily.

The protein resides in the cell inner membrane. The enzyme catalyses Preferential cleavage: (Ac)2-L-Lys-D-Ala-|-D-Ala. Also transpeptidation of peptidyl-alanyl moieties that are N-acyl substituents of D-alanine.. It functions in the pathway cell wall biogenesis; peptidoglycan biosynthesis. Its function is as follows. Catalyzes cross-linking of the peptidoglycan cell wall. The chain is Peptidoglycan D,D-transpeptidase MrdA from Escherichia coli O157:H7.